Here is a 181-residue protein sequence, read N- to C-terminus: Malignant T-cell-amplified sequence 1-A (181 aa).

The PUA domain occupies 92-171 (LPHQQVDKGA…IGIENIHYLN (80 aa)).

The protein belongs to the MCTS1 family.

It localises to the cytoplasm. Plays a role as translation enhancer and involved in cell cycle regulation. The polypeptide is Malignant T-cell-amplified sequence 1-A (mcts1-a) (Xenopus laevis (African clawed frog)).